We begin with the raw amino-acid sequence, 485 residues long: Pelle-like serine/threonine-protein kinase pik-1 (485 aa).

The span at 115-132 (TSRVSKQMVQPPGSQSAS) shows a compositional bias: polar residues. The tract at residues 115–155 (TSRVSKQMVQPPGSQSASRLKKTEIKESSPSPAAAAASQLS) is disordered. Over residues 142-152 (SSPSPAAAAAS) the composition is skewed to low complexity. The region spanning 185-485 (FAVSNVIGKG…LCKNSIPPVV (301 aa)) is the Protein kinase domain. ATP is bound by residues 191–199 (IGKGGYGTV) and K214. D318 (proton acceptor) is an active-site residue.

It belongs to the protein kinase superfamily. TKL Ser/Thr protein kinase family. Pelle subfamily. As to quaternary structure, interacts with actl-1. Expressed in the nervous system.

It carries out the reaction L-seryl-[protein] + ATP = O-phospho-L-seryl-[protein] + ADP + H(+). The enzyme catalyses L-threonyl-[protein] + ATP = O-phospho-L-threonyl-[protein] + ADP + H(+). Its function is as follows. Through association with the adapter actl-1, may act downstream of the receptor complex composed of ilcr-1 and ilcr-2, which is a signaling complex that modulates neuronal activity and animal behavior in response to sensory neuron input. The chain is Pelle-like serine/threonine-protein kinase pik-1 from Caenorhabditis elegans.